We begin with the raw amino-acid sequence, 309 residues long: Shugoshin (309 aa).

Residues 42–77 (NLLLKQQVVQCTKTIEKLRNENVALRQKNQELIDGT) are a coiled coil. 2 disordered regions span residues 165–195 (FDNN…KGRR) and 210–309 (EEAS…NTFF). The segment covering 167–178 (NNSSQSTSSIQN) has biased composition (low complexity). The segment covering 184–193 (PRKKQSVGKG) has biased composition (basic residues).

This sequence belongs to the shugoshin family. As to expression, expressed in gonads.

The protein resides in the nucleus. Its subcellular location is the chromosome. It is found in the centromere. Functionally, component of cell cycle checkpoints, which ensures chromosome segregation during meiosis and mitosis. During meiotic prophase, it is involved in the regulation of the synapsis checkpoint, which monitors whether homologous chromosomes have synapsed, and the DNA damage response. Plays a central role in chromosome cohesion during cell division by preventing premature dissociation of cohesin complex after prophase, when most of cohesin complex dissociates from chromosomes arms. In Caenorhabditis elegans, this protein is Shugoshin.